The sequence spans 226 residues: Lipoprotein-releasing system ATP-binding protein LolD (226 aa).

An ABC transporter domain is found at 5 to 226 (LKATNINKIY…LLRNGHWENY (222 aa)). 41 to 48 (GTSGSGKS) provides a ligand contact to ATP.

It belongs to the ABC transporter superfamily. Lipoprotein translocase (TC 3.A.1.125) family. As to quaternary structure, the complex is composed of two ATP-binding proteins (LolD) and two transmembrane proteins (LolC and LolE).

It localises to the cell inner membrane. Part of the ABC transporter complex LolCDE involved in the translocation of mature outer membrane-directed lipoproteins, from the inner membrane to the periplasmic chaperone, LolA. Responsible for the formation of the LolA-lipoprotein complex in an ATP-dependent manner. This chain is Lipoprotein-releasing system ATP-binding protein LolD, found in Psychrobacter cryohalolentis (strain ATCC BAA-1226 / DSM 17306 / VKM B-2378 / K5).